A 125-amino-acid polypeptide reads, in one-letter code: Holo-[acyl-carrier-protein] synthase (125 aa).

Mg(2+)-binding residues include aspartate 8 and glutamate 56.

The protein belongs to the P-Pant transferase superfamily. AcpS family. The cofactor is Mg(2+).

The protein resides in the cytoplasm. The catalysed reaction is apo-[ACP] + CoA = holo-[ACP] + adenosine 3',5'-bisphosphate + H(+). Its function is as follows. Transfers the 4'-phosphopantetheine moiety from coenzyme A to a Ser of acyl-carrier-protein. In Borrelia hermsii (strain HS1 / DAH), this protein is Holo-[acyl-carrier-protein] synthase.